Consider the following 57-residue polypeptide: MIQSPTSFLIVLVLLWCKLVISCFRECFVALHQLVQVLLQIINSNLQSRLLLWHSLD.

The N-terminal stretch at 1–23 (MIQSPTSFLIVLVLLWCKLVISC) is a signal peptide.

Its function is as follows. Involved in resistance to IFN. The protein is Non-structural protein 3a of Avian infectious bronchitis virus (strain UK/68/84) (IBV).